The following is a 339-amino-acid chain: Anthranilate phosphoribosyltransferase (339 aa).

5-phospho-alpha-D-ribose 1-diphosphate contacts are provided by residues G81, 84–85 (GD), T89, 91–94 (NIST), 109–117 (KHGNRSVSS), and S121. Residue G81 participates in anthranilate binding. S93 is a Mg(2+) binding site. N112 is a binding site for anthranilate. R165 serves as a coordination point for anthranilate. D224 and E225 together coordinate Mg(2+).

Belongs to the anthranilate phosphoribosyltransferase family. Homodimer. Mg(2+) serves as cofactor.

The catalysed reaction is N-(5-phospho-beta-D-ribosyl)anthranilate + diphosphate = 5-phospho-alpha-D-ribose 1-diphosphate + anthranilate. The protein operates within amino-acid biosynthesis; L-tryptophan biosynthesis; L-tryptophan from chorismate: step 2/5. In terms of biological role, catalyzes the transfer of the phosphoribosyl group of 5-phosphorylribose-1-pyrophosphate (PRPP) to anthranilate to yield N-(5'-phosphoribosyl)-anthranilate (PRA). The chain is Anthranilate phosphoribosyltransferase from Thermosynechococcus vestitus (strain NIES-2133 / IAM M-273 / BP-1).